We begin with the raw amino-acid sequence, 78 residues long: Exodeoxyribonuclease 7 small subunit (78 aa).

The protein belongs to the XseB family. In terms of assembly, heterooligomer composed of large and small subunits.

The protein resides in the cytoplasm. It catalyses the reaction Exonucleolytic cleavage in either 5'- to 3'- or 3'- to 5'-direction to yield nucleoside 5'-phosphates.. Bidirectionally degrades single-stranded DNA into large acid-insoluble oligonucleotides, which are then degraded further into small acid-soluble oligonucleotides. This is Exodeoxyribonuclease 7 small subunit from Psychromonas ingrahamii (strain DSM 17664 / CCUG 51855 / 37).